A 282-amino-acid polypeptide reads, in one-letter code: F-actin-capping protein subunit alpha (282 aa).

The protein belongs to the F-actin-capping protein alpha subunit family. Component of the F-actin capping complex, composed of a heterodimer of an alpha and a beta subunit.

It is found in the cytoplasm. The protein localises to the cytoskeleton. Functionally, F-actin-capping proteins bind in a Ca(2+)-independent manner to the fast growing ends of actin filaments (barbed end) thereby blocking the exchange of subunits at these ends. Unlike other capping proteins (such as gelsolin and severin), these proteins do not sever actin filaments. The polypeptide is F-actin-capping protein subunit alpha (cap-1) (Caenorhabditis elegans).